The following is a 363-amino-acid chain: Adenosine deaminase (363 aa).

Zn(2+) is bound by residues histidine 42 and histidine 44. A purine D-ribonucleoside-binding positions include histidine 44–aspartate 46, aspartate 172, and glycine 201. The interval isoleucine 170–alanine 184 is gating helix loop; regulates binding affinity for substrates and thus substrate selectivity. Histidine 226 serves as a coordination point for Zn(2+). A purine D-ribonucleoside contacts are provided by glutamate 229, histidine 253, and aspartate 310. Aspartate 310 lines the Zn(2+) pocket.

This sequence belongs to the metallo-dependent hydrolases superfamily. Adenosine and AMP deaminases family. Requires Zn(2+) as cofactor.

It catalyses the reaction adenosine + H2O + H(+) = inosine + NH4(+). The enzyme catalyses S-methyl-5'-thioadenosine + H2O + H(+) = S-methyl-5'-thioinosine + NH4(+). Its pathway is purine metabolism; purine nucleoside salvage. Its activity is regulated as follows. Inhibited by coformycin and methylthiocoformycin (MT-coformycin). Its function is as follows. Catalyzes the hydrolytic deamination of adenosine to produce inosine. Unlike mammalian adenosine deaminases, also catalyzes the deamination of 5'-methylthioadenosine (MTA), a by-product of polyamine biosynthesis, to produce 5'-methylthioinosine (MTI). Plays an essential role in the purine salvage pathway which allows the parasite to use host cell purines for the synthesis of nucleic acids. The polypeptide is Adenosine deaminase (Plasmodium knowlesi).